A 448-amino-acid chain; its full sequence is N-succinylarginine dihydrolase (448 aa).

Residues 19–28 (GGLSYGNVAS), Asn-110, and 137–138 (HR) each bind substrate. Glu-174 is an active-site residue. Substrate is bound at residue Arg-214. His-250 is an active-site residue. 2 residues coordinate substrate: Asp-252 and Asn-365. The active-site Nucleophile is the Cys-371.

It belongs to the succinylarginine dihydrolase family. As to quaternary structure, homodimer.

It carries out the reaction N(2)-succinyl-L-arginine + 2 H2O + 2 H(+) = N(2)-succinyl-L-ornithine + 2 NH4(+) + CO2. It functions in the pathway amino-acid degradation; L-arginine degradation via AST pathway; L-glutamate and succinate from L-arginine: step 2/5. Catalyzes the hydrolysis of N(2)-succinylarginine into N(2)-succinylornithine, ammonia and CO(2). The sequence is that of N-succinylarginine dihydrolase from Pseudomonas fluorescens (strain Pf0-1).